The chain runs to 268 residues: Shikimate dehydrogenase (NADP(+)) (268 aa).

Residues 13–15 (SLS) and Thr60 contribute to the shikimate site. The active-site Proton acceptor is Lys64. Residue Glu76 coordinates NADP(+). The shikimate site is built by Asn85 and Asp100. NADP(+) contacts are provided by residues 124 to 128 (GAGGA), 148 to 153 (NRTMAR), and Ile209. Tyr211 lines the shikimate pocket. Residue Gly232 participates in NADP(+) binding.

It belongs to the shikimate dehydrogenase family. In terms of assembly, homodimer.

The catalysed reaction is shikimate + NADP(+) = 3-dehydroshikimate + NADPH + H(+). Its pathway is metabolic intermediate biosynthesis; chorismate biosynthesis; chorismate from D-erythrose 4-phosphate and phosphoenolpyruvate: step 4/7. Involved in the biosynthesis of the chorismate, which leads to the biosynthesis of aromatic amino acids. Catalyzes the reversible NADPH linked reduction of 3-dehydroshikimate (DHSA) to yield shikimate (SA). This chain is Shikimate dehydrogenase (NADP(+)), found in Staphylococcus aureus (strain bovine RF122 / ET3-1).